An 846-amino-acid chain; its full sequence is MMKHPFSNNHIINGNNNNNNLINGKVGIFWNLFETPLPIQQYSISHILNQLKFYANSLGYIKQFTIISDISNAGNSVTPSTYNIIKQEISQFGGIQYFEIFQSDRSELVSKIWEFIFDNYHEVSNGLHIILVDRFANDSPIIKPLTMRGIKISTLVSPVPTFHNQNQNNNNQNNNQNNNNNNNNNNNNNNNNNNNNNNNSQNNNNNQNNNNNHINHINQNINNVSNETHSFFSENINYSLNPYSDDLSYNGNGCNLNGNNNNNNNNNNNNNNSNSNSNIVIVTQMSSPILSHHNQNNQNNLSGLHFNSLSSYGNNSNPINNGQQSQIHHNINKLNLNNPPPPSNPLTSGLSYSPLQSPNSQSLANSSANISSNALNQSSSSQQQQPQSTSQQQQQQHKMNSSSGNISPPLPLSISLGLCRGGSSNISPLPSPSLSSSSSGSALSPATLTLIMPSTFQSGSSITPKNLSPLSSSAPNTPKQFASLSSSSSPSSSTSSSSNSLLNNGVLSHSLSSLLSLSQPPTQQQQIQQLHIQQLQQQQQQQQQQQQQQQQQQQQQQQQQQQHHHHQQQQQQSPPQNQKNNQQNQNQNQNQNQNQNQNQNQNQNQNQNQNQNQNQNQNQNQNQNQNQNQNQQNQHQQNQPNNIKFPSNFNDNTTLQNLYTVIQGLKEDGFKPTFKVILPRLGAMMGMRVHRSHFEKILEKAKTHSFNIDYTTKTIYYKDDNFGGADPHKAEKCHFTEEEIQELVDLIETTQIKVFPSRYNMVMWVTSQNLPLISKLKQGQIVELCQITINENIVSLDENLKKTTTTTEPQNNNNNNNNNNNNNNNNNNNNNNNNNNNNNNNNNKNK.

Disordered stretches follow at residues 159–217 (VPTF…INHI), 254–276 (CNLN…SNSN), 332–414 (NKLN…PLSI), 459–501 (GSSI…SNSL), 556–651 (QQQQ…NFND), and 803–846 (TTTT…NKNK). Low complexity predominate over residues 163 to 217 (HNQNQNNNNQNNNQNNNNNNNNNNNNNNNNNNNNNNNSQNNNNNQNNNNNHINHI). A compositionally biased stretch (low complexity) spans 355–414 (LQSPNSQSLANSSANISSNALNQSSSSQQQQPQSTSQQQQQQHKMNSSSGNISPPLPLSI). Residues 459 to 482 (GSSITPKNLSPLSSSAPNTPKQFA) show a composition bias toward polar residues. Low complexity-rich tracts occupy residues 483–501 (SLSS…SNSL), 568–642 (QQQQ…QPNN), and 811–846 (NNNN…NKNK).

This is an uncharacterized protein from Dictyostelium discoideum (Social amoeba).